The following is a 328-amino-acid chain: Phosphate acyltransferase (328 aa).

Belongs to the PlsX family. In terms of assembly, homodimer. Probably interacts with PlsY.

The protein resides in the cytoplasm. The enzyme catalyses a fatty acyl-[ACP] + phosphate = an acyl phosphate + holo-[ACP]. Its pathway is lipid metabolism; phospholipid metabolism. Functionally, catalyzes the reversible formation of acyl-phosphate (acyl-PO(4)) from acyl-[acyl-carrier-protein] (acyl-ACP). This enzyme utilizes acyl-ACP as fatty acyl donor, but not acyl-CoA. This chain is Phosphate acyltransferase, found in Staphylococcus aureus (strain Mu3 / ATCC 700698).